The chain runs to 938 residues: Glutamate receptor ionotropic, NMDA 1 (938 aa).

The signal sequence occupies residues Met1 to Ala18. The Extracellular segment spans residues Arg19 to Gln559. N-linked (GlcNAc...) asparagine glycosylation is found at Asn61, Asn203, Asn239, Asn276, Asn300, Asn350, Asn368, Asn440, Asn471, and Asn491. Cys79 and Cys308 are oxidised to a cystine. 2 disulfides stabilise this stretch: Cys420-Cys454 and Cys436-Cys455. Residues Pro516, Thr518, and Arg523 each contribute to the glycine site. A helical membrane pass occupies residues Ser560–Leu580. Topologically, residues Asp581–Ser604 are cytoplasmic. The tract at residues Leu603 to Pro624 is pore-forming. An intramembrane region (discontinuously helical) is located at residues Ser605–Leu615. The Cytoplasmic segment spans residues Asn616 to Phe627. Residues Ser628–Thr648 form a helical membrane-spanning segment. The Extracellular segment spans residues Ala649 to Glu811. Asn674 carries an N-linked (GlcNAc...) asparagine glycan. Glycine contacts are provided by Ser688 and Asp732. A disulfide bond links Cys744 and Cys798. N-linked (GlcNAc...) asparagine glycosylation is present at Asn771. The chain crosses the membrane as a helical span at residues Asn812–Ile835. Over Ala836–Ser938 the chain is Cytoplasmic. 4 positions are modified to phosphoserine; by PKC: Ser889, Ser890, Ser896, and Ser897. The tract at residues Ser889–Ser938 is disordered. The span at Val916–Gly927 shows a compositional bias: basic and acidic residues.

The protein belongs to the glutamate-gated ion channel (TC 1.A.10.1) family. NR1/GRIN1 subfamily. In terms of assembly, heterotetramer; the NMDAR subunits are modular and harbor tiered domains that function in concert to regulate opening and closing of the cation-selective ion channel pore. Forms heterotetrameric channels composed of two GluN1/zeta subunits (GRIN1), and two identical GluN2/epsilon subunits (GRIN2A, GRIN2B, GRIN2C or GRIN2D) or GluN3 subunits (GRIN3A or GRIN3B) (in vitro). Can also form heterotetrameric channels that contain at least two GluN1 subunits and at least two different GluN2 subunits (or a combination of one GluN2 and one GluN3 subunits) (in vitro). In vivo, the subunit composition may vary in function of the expression levels of the different subunits. Found in a complex with GRIN2A or GRIN2B, GRIN3A and PPP2CB. Found in a complex with GRIN2A or GRIN2B and GRIN3B. Interacts with SNX27 (via PDZ domain); the interaction is required for recycling to the plasma membrane when endocytosed and prevent degradation in lysosomes. Interacts with DLG4 and MPDZ. Interacts with LRFN1 and LRFN2. Interacts with MYZAP. Found in a complex with DLG4 and PRR7. Found in a complex with GRIN2B and PRR7. Interacts with PRR7; the interaction is reduced following NMDA receptor activity. NMDA is probably regulated by C-terminal phosphorylation of an isoform of GRIN1 by PKC. Dephosphorylated on Ser-897 probably by protein phosphatase 2A (PPP2CB). Its phosphorylated state is influenced by the formation of the NMDAR-PPP2CB complex and the NMDAR channel activity.

The protein resides in the cell membrane. The protein localises to the postsynaptic cell membrane. Its subcellular location is the postsynaptic density membrane. It is found in the synaptic cell membrane. The catalysed reaction is Ca(2+)(in) = Ca(2+)(out). It carries out the reaction Na(+)(in) = Na(+)(out). The enzyme catalyses K(+)(in) = K(+)(out). With respect to regulation, NMDA glutamate receptor activity is inhbited by Mg2(+) in a voltage-dependent manner; Mg2(+)-induced blockade occurs only at negative potentials and decreases with membrane depolarization. 7-chlorokynurenate (50 uM) or Zn2(+) (100 uM) partially inhibit the NMDA glutamate receptor activity, while acide 2-amino-5-phosphonovalerique(100 uM) almost completely blocked the NMDA glutamate receptor activity. Dizocilpine (1 uM) results in long lasting and almost complete block of the NMDA glutamate receptor activity. Its function is as follows. Component of N-methyl-D-aspartate (NMDA) receptors (NMDARs) that function as heterotetrameric, ligand-gated cation channels with high calcium permeability and voltage-dependent block by Mg(2+). NMDARs participate in synaptic plasticity for learning and memory formation by contributing to the long-term potentiation (LTP). Channel activation requires binding of the neurotransmitter L-glutamate to the GluN2 subunit, glycine or D-serine binding to the GluN1 subunit, plus membrane depolarization to eliminate channel inhibition by Mg(2+). NMDARs mediate simultaneously the potasium efflux and the influx of calcium and sodium. Each GluN2 or GluN3 subunit confers differential attributes to channel properties, including activation, deactivation and desensitization kinetics, pH sensitivity, Ca2(+) permeability, and binding to allosteric modulators. This chain is Glutamate receptor ionotropic, NMDA 1, found in Homo sapiens (Human).